The sequence spans 224 residues: Casparian strip membrane protein 3 (224 aa).

Residues 1 to 30 (MESKKEGVASAPTSPESRRTRSNGKGKTIA) are disordered. At 1–57 (MESKKEGVASAPTSPESRRTRSNGKGKTIAEATPPSVTVVSTKVTPSPRGGWRKGAA) the chain is on the cytoplasmic side. Residues 58–78 (ILDFILRLGAISSAIGAAAVM) traverse the membrane as a helical segment. Over 79-105 (GNNEQILPFFTQFFQFHVQWDDFPMFQ) the chain is Extracellular. A helical transmembrane segment spans residues 106–126 (FFVFANGAAVVFLILSLPFSI). Over 127-138 (VCIVRPFAVGPR) the chain is Cytoplasmic. A helical membrane pass occupies residues 139 to 159 (LLLVIVDIFAMALVIAAASAA). The Extracellular portion of the chain corresponds to 160–191 (AAVVYLAHNGSQDANWIAICQQYTDFCQVTSQ). N-linked (GlcNAc...) asparagine glycosylation is present at Asn168. A helical transmembrane segment spans residues 192-212 (AVVASFVAAVFLICLIVLSSV). Over 213–224 (ALKKGLKREFGW) the chain is Cytoplasmic.

This sequence belongs to the Casparian strip membrane proteins (CASP) family. Homodimer and heterodimers.

The protein localises to the cell membrane. Regulates membrane-cell wall junctions and localized cell wall deposition. Required for establishment of the Casparian strip membrane domain (CSD) and the subsequent formation of Casparian strips, a cell wall modification of the root endodermis that determines an apoplastic barrier between the intraorganismal apoplasm and the extraorganismal apoplasm and prevents lateral diffusion. The polypeptide is Casparian strip membrane protein 3 (Vigna unguiculata (Cowpea)).